A 917-amino-acid polypeptide reads, in one-letter code: Probable dipeptidyl-aminopeptidase B (917 aa).

A disordered region spans residues 1–78 (MGVEKRINDE…EGDLEEGFVP (78 aa)). Residues 1–90 (MGVEKRINDE…GGWSAPRKVS (90 aa)) lie on the Cytoplasmic side of the membrane. Over residues 16 to 26 (AERDDKSRDSI) the composition is skewed to basic and acidic residues. A compositionally biased stretch (low complexity) spans 27 to 49 (DSTSTASISLALLGGANGSAHGS). The segment covering 55-65 (RKSENQEKYHD) has biased composition (basic and acidic residues). The helical; Signal-anchor for type II membrane protein transmembrane segment at 91–111 (VIFTLIVTLCIAGWLVAFFVL) threads the bilayer. Over 112–917 (LGRHKDSSKD…LGLINILRNG (806 aa)) the chain is Vacuolar. Residues asparagine 350 and asparagine 465 are each glycosylated (N-linked (GlcNAc...) asparagine). The active-site Charge relay system is the serine 754. Asparagine 813 carries an N-linked (GlcNAc...) asparagine glycan. Residues aspartate 831 and histidine 864 each act as charge relay system in the active site.

The protein belongs to the peptidase S9B family.

It is found in the vacuole membrane. The catalysed reaction is Release of an N-terminal dipeptide, Xaa-Yaa-|-Zaa-, from a polypeptide, preferentially when Yaa is Pro, provided Zaa is neither Pro nor hydroxyproline.. Its function is as follows. Type IV dipeptidyl-peptidase which removes N-terminal dipeptides sequentially from polypeptides having unsubstituted N-termini provided that the penultimate residue is proline. In Coccidioides posadasii (strain C735) (Valley fever fungus), this protein is Probable dipeptidyl-aminopeptidase B (DAPB).